Here is a 110-residue protein sequence, read N- to C-terminus: Carboxysome shell protein CsoS1B (110 aa).

Residues 8–93 enclose the BMC domain; sequence ALGMIETRGL…VHSEVEIILP (86 aa).

Belongs to the bacterial microcompartments protein family. CsoS1 subfamily. In terms of assembly, homohexamer with a small central pore. Interacts with the N-terminus (residues 1-136) of RuBisCO (CbbL).

The protein localises to the carboxysome. Functionally, one of shell proteins of the carboxysome, a polyhedral inclusion where RuBisCO (ribulose bisphosphate carboxylase, ccbL-ccbS) is sequestered. Assembles into hexamers which make sheets that form the facets of the polyhedral carboxysome. The shell probably limits the diffusion of CO(2) into and out of the carboxysome. There are estimated to be 540 CsoS1B proteins per carboxysome. In terms of biological role, unlike beta-carboxysomes, alpha-carboxysomes (Cb) can form without cargo protein. CsoS2 is essential for Cb formation and is also capable of targeting foreign proteins to the Cb. The Cb shell assembles with the aid of CsoS2; CsoS1A, CsoS1B and CsoS1C form the majority of the shell while CsoS4A and CsoS4B form vertices. CsoS1D forms pseudohexamers that probably control metabolite flux into and out of the shell. The protein is Carboxysome shell protein CsoS1B of Halothiobacillus neapolitanus (strain ATCC 23641 / c2) (Thiobacillus neapolitanus).